The sequence spans 407 residues: uncharacterized protein (407 aa).

2 disordered regions span residues 73–93 and 116–202; these read SPHS…VHGG and SGSI…IKPS. Tandem repeats lie at residues 112-116, 117-121, 122-126, 127-131, and 132-136. The interval 112-136 is 5 X 5 AA tandem repeats of G-[S]-[IV]-R-[DNS]; sequence GSIRSGSIRSGSIRNGSIRSGSVRD. Positions 116–132 are enriched in low complexity; it reads SGSIRSGSIRNGSIRSG. Residues 187-202 show a composition bias toward basic and acidic residues; sequence NHYAESEYSEKSIKPS.

It belongs to the asfivirus B407L family.

This is an uncharacterized protein from Ornithodoros (relapsing fever ticks).